Consider the following 200-residue polypeptide: Protein GrpE (200 aa).

The protein belongs to the GrpE family. In terms of assembly, homodimer.

It is found in the cytoplasm. Participates actively in the response to hyperosmotic and heat shock by preventing the aggregation of stress-denatured proteins, in association with DnaK and GrpE. It is the nucleotide exchange factor for DnaK and may function as a thermosensor. Unfolded proteins bind initially to DnaJ; upon interaction with the DnaJ-bound protein, DnaK hydrolyzes its bound ATP, resulting in the formation of a stable complex. GrpE releases ADP from DnaK; ATP binding to DnaK triggers the release of the substrate protein, thus completing the reaction cycle. Several rounds of ATP-dependent interactions between DnaJ, DnaK and GrpE are required for fully efficient folding. This chain is Protein GrpE, found in Geobacter sulfurreducens (strain ATCC 51573 / DSM 12127 / PCA).